Reading from the N-terminus, the 289-residue chain is Pteridine reductase 1 (289 aa).

14–41 is an NADP(+) binding site; sequence GAAKRLGSSIAEALHAEGYTVCLHYHRS. S176 is a substrate binding site. The active-site Proton acceptor is the Y195. An NADP(+)-binding site is contributed by 195 to 199; that stretch reads YTMAK.

Belongs to the short-chain dehydrogenases/reductases (SDR) family. In terms of assembly, homotetramer.

It carries out the reaction (6R)-L-erythro-5,6,7,8-tetrahydrobiopterin + 2 NADP(+) = L-erythro-biopterin + 2 NADPH + 2 H(+). It functions in the pathway cofactor biosynthesis; tetrahydrobiopterin biosynthesis; tetrahydrobiopterin from biopterin: step 1/1. Exhibits a NADPH-dependent biopterin reductase activity. Has good activity with folate and significant activity with dihydrofolate and dihydrobiopterin, but not with quinonoid dihydrobiopterin. Confers resistance to methotrexate (MTX). This chain is Pteridine reductase 1 (PTR1), found in Leishmania tarentolae (Sauroleishmania tarentolae).